Consider the following 795-residue polypeptide: MKFSEKWLREWVNPAIDTQALSEQLSMAGLEVDGVTPAAAKFNGVLVGEVVECGQHPDADKLRVTKINVGGDELLDIVCGAPNCRLGIKVAVATVGAVLPGDFKIKKAKLRGQPSNGMLCAFVELGISEEGDGIMELPSDAPVGTDLREYLGLDDNIIDVDLTPNRGDCLGIKGLAREVGVLNSIDVNVLQIPAVTATVDDKVSIELVNEDACPRYLGRVIKGINLDTATPLWMVEKLRRSGVRSIDPVVDVTNYVLLELGHPMHAFDLNAIEGGIKVRSANAGEELVLLDGNSVKLNESTLVIADHNKALAIAGIFGGEQSGVTNKTSDILLESAFFNPVAIAGQARSYGLHTDASHRYERGVDFALQHDAIERATALLLEIVGGEAGPVVEAVAADKLPKVTEVRLRRSRLDRVIGHHIEDEKVTDILTRLGFNVKVENDSWSADVPSYRFDVRIEEDLIEEVARVYGYNSIPNVAPTAKLKMTTHNEATIALSKFRNTLVARGYQEAITYSFVDPKAQAILHPESQPLVLPHPISIEMSAMRVSLMPGLLASLAYNQNRQQPRIRLFEHGLKFLSDENAENGVNQVPVIGGVITGLAHGEHWVEEKRNVDFYDVKGDVEALLAITNDMSRFEIKAEQSDGLHPGQSAVIYVAGKKVGFFGALHPQAQKSLDINNATFVFEIEMSAIEKRNLPQVAGVSKFPSNRRDIAILVQESVNIGDILTAIEKVGGNQLVDLNLFDVYKGKGIEPNYKSLAIALTLQSVDRTLEEKDINLVVDNVVATLAEQFNASLRD.

The region spanning 39–148 is the tRNA-binding domain; it reads AAKFNGVLVG…SDAPVGTDLR (110 aa). The 76-residue stretch at 401–476 folds into the B5 domain; that stretch reads PKVTEVRLRR…RVYGYNSIPN (76 aa). Mg(2+) contacts are provided by Asp-454, Asp-460, Glu-463, and Glu-464. One can recognise an FDX-ACB domain in the interval 701–794; it reads SKFPSNRRDI…LAEQFNASLR (94 aa).

This sequence belongs to the phenylalanyl-tRNA synthetase beta subunit family. Type 1 subfamily. Tetramer of two alpha and two beta subunits. Mg(2+) is required as a cofactor.

It localises to the cytoplasm. It catalyses the reaction tRNA(Phe) + L-phenylalanine + ATP = L-phenylalanyl-tRNA(Phe) + AMP + diphosphate + H(+). This Pseudoalteromonas translucida (strain TAC 125) protein is Phenylalanine--tRNA ligase beta subunit.